The following is a 140-amino-acid chain: Organic hydroperoxide resistance protein-like (140 aa).

This sequence belongs to the OsmC/Ohr family.

This is Organic hydroperoxide resistance protein-like from Staphylococcus aureus (strain bovine RF122 / ET3-1).